Reading from the N-terminus, the 1304-residue chain is Splicing factor 3B subunit 1 (1304 aa).

Disordered stretches follow at residues 100–119 (QYDP…EDEY) and 124–148 (RTMI…PKMN). A compositionally biased stretch (basic and acidic residues) spans 104–119 (FAEHRPPKIADREDEY). Thr-125 carries the post-translational modification Phosphothreonine. A Phosphoserine modification is found at Ser-129. Residue Lys-141 is modified to N6-acetyllysine. The residue at position 142 (Thr-142) is a Phosphothreonine. Arg-157 bears the Citrulline mark. Positions 173-360 (AEKAKAGELK…PVLTPGKTPI (188 aa)) are disordered. A U2AF homology region; mediates interaction with RBM39 region spans residues 190-342 (SQPPSKRKRR…KRKSRWDETP (153 aa)). Ser-194 is subject to Phosphoserine. 3 positions are modified to phosphothreonine: Thr-203, Thr-207, and Thr-211. At Lys-214 the chain carries N6-acetyllysine; alternate. Residue Lys-214 forms a Glycyl lysine isopeptide (Lys-Gly) (interchain with G-Cter in SUMO2); alternate linkage. Phosphothreonine is present on residues Thr-223 and Thr-227. Positions 223–491 (TPGHTPSLRW…VDESTLSPEE (269 aa)) are interaction with PPP1R8. Ser-229 carries the post-translational modification Phosphoserine. Over residues 231-241 (RWDETPGRAKG) the composition is skewed to basic and acidic residues. 8 positions are modified to phosphothreonine: Thr-235, Thr-244, Thr-248, Thr-257, Thr-261, Thr-267, Thr-273, and Thr-278. At Ser-287 the chain carries Phosphoserine. The span at 291–304 (NRWDETPKTERDTP) shows a compositional bias: basic and acidic residues. 4 positions are modified to phosphothreonine: Thr-296, Thr-299, Thr-303, and Thr-313. Ser-322 carries the post-translational modification Phosphoserine. Thr-326 and Thr-328 each carry phosphothreonine. At Ser-332 the chain carries Phosphoserine. Thr-341 bears the Phosphothreonine mark. The span at 342–352 (PASQMGGSTPV) shows a compositional bias: polar residues. Phosphoserine is present on residues Ser-344 and Ser-349. Phosphothreonine occurs at positions 350 and 354. The residue at position 400 (Ser-400) is a Phosphoserine. Lys-413 participates in a covalent cross-link: Glycyl lysine isopeptide (Lys-Gly) (interchain with G-Cter in SUMO2); alternate. Lys-413 participates in a covalent cross-link: Glycyl lysine isopeptide (Lys-Gly) (interchain with G-Cter in SUMO1); alternate. Thr-426 is subject to Phosphothreonine. Lys-430 is covalently cross-linked (Glycyl lysine isopeptide (Lys-Gly) (interchain with G-Cter in SUMO2)). The residue at position 434 (Thr-434) is a Phosphothreonine; by DYRK1A. Phosphothreonine is present on Thr-436. The residue at position 488 (Ser-488) is a Phosphoserine. 11 HEAT repeats span residues 529 to 568 (GPLF…DLVR), 569 to 603 (PYVH…LAKA), 604 to 641 (AGLA…ALGI), 643 to 677 (SLLP…LMGC), 680 to 718 (LPHL…AATP), 763 to 801 (NYYT…TDGV), 843 to 881 (KVGA…NLGA), 1010 to 1048 (TPPI…RGAE), 1052 to 1090 (AREW…AIGP), 1122 to 1160 (TCSP…YIGE), and 1163 to 1201 (KDYI…GVYG). Residues 529–568 (GPLFNQILPLLMSPTLEDQERHLLVKVIDRILYKLDDLVR) form an interaction with SF3B14 region. The interaction with PHF5A stretch occupies residues 547–550 (QERH). Residues Lys-554 and Lys-562 each carry the N6-acetyllysine modification. The interaction with PHF5A stretch occupies residues 1156–1157 (EY). Residues 1248 to 1304 (QYCLQGLFHPARKVRDVYWKIYNSIYIGSQDALIAHYPRIYNDDKNTYIRYELDYIL) form an interaction with SF3B3 and SF3B5 region.

Belongs to the SF3B1 family. In terms of assembly, component of the 17S U2 SnRNP complex, a ribonucleoprotein complex that contains small nuclear RNA (snRNA) U2 and a number of specific proteins. Part of the SF3B subcomplex of the 17S U2 SnRNP complex. SF3B associates with the splicing subcomplex SF3A and a 12S RNA unit to form the U2 small nuclear ribonucleoproteins complex (U2 snRNP). Within the SF3B complex, interacts directly (via HEAT domain) with SF3B3, SF3B5, SF3B6 and (via HEAT domain) with PHF5A. The SF3B subcomplex interacts with U2AF2. Identified in the spliceosome C complex. Component of the minor (U12-type spliceosome) spliceosome. Within the minor spliceosome complex, interacts with SCNM1 and CRIPT. Component of the B-WICH complex, at least composed of SMARCA5/SNF2H, BAZ1B/WSTF, SF3B1, DEK, MYO1C, ERCC6, MYBBP1A and DDX21. Phosphorylated form interacts with PPP1R8. Interacts with PQBP1. Interacts with RBM17. Interacts with RBM39. Interacts with SETX. Interacts with RBM15. Interacts with USH1G. Interacts with SDE2. Interacts with U2AF1. Interacts with CACTIN. Interacts with ZRSR1. Interacts with CYREN. In terms of processing, phosphorylated. Phosphorylation occurs concomitantly with the splicing catalytic steps. Phosphorylation on Thr-244, Thr-248 and Thr-313 by cyclin-dependent kinases promotes interaction with PPP1R8 during mitosis. Post-translationally, citrullinated by PADI4.

It is found in the nucleus. It localises to the nucleus speckle. Component of the 17S U2 SnRNP complex of the spliceosome, a large ribonucleoprotein complex that removes introns from transcribed pre-mRNAs. The 17S U2 SnRNP complex (1) directly participates in early spliceosome assembly and (2) mediates recognition of the intron branch site during pre-mRNA splicing by promoting the selection of the pre-mRNA branch-site adenosine, the nucleophile for the first step of splicing. Within the 17S U2 SnRNP complex, SF3B1 is part of the SF3B subcomplex, which is required for 'A' complex assembly formed by the stable binding of U2 snRNP to the branchpoint sequence in pre-mRNA. Sequence independent binding of SF3A and SF3B subcomplexes upstream of the branch site is essential, it may anchor U2 snRNP to the pre-mRNA. May also be involved in the assembly of the 'E' complex. Also acts as a component of the minor spliceosome, which is involved in the splicing of U12-type introns in pre-mRNAs. Together with other U2 snRNP complex components may also play a role in the selective processing of microRNAs (miRNAs) from the long primary miRNA transcript, pri-miR-17-92. This is Splicing factor 3B subunit 1 from Homo sapiens (Human).